We begin with the raw amino-acid sequence, 236 residues long: Class B acid phosphatase (236 aa).

Positions 1-22 are cleaved as a signal peptide; that stretch reads MNHTLRSITLVLACVASLSANA. The active-site Nucleophile is the Asp-70. Residues Asp-70 and Asp-72 each coordinate Mg(2+). The active-site Proton donor is Asp-72. Substrate contacts are provided by residues 138-139 and Lys-176; that span reads TG. Asp-191 is a binding site for Mg(2+).

It belongs to the class B bacterial acid phosphatase family. As to quaternary structure, homotetramer. Mg(2+) serves as cofactor.

The protein localises to the periplasm. The catalysed reaction is a phosphate monoester + H2O = an alcohol + phosphate. Functionally, dephosphorylates several organic phosphate monoesters. Also has a phosphotransferase activity catalyzing the transfer of low-energy phosphate groups from organic phosphate monoesters to free hydroxyl groups of various organic compounds. The sequence is that of Class B acid phosphatase from Marinomonas sp. (strain MWYL1).